The chain runs to 107 residues: Putative ankyrin repeat protein RP714 (107 aa).

3 ANK repeats span residues 7–36, 40–69, and 73–102; these read PPLSPLIIAVLNGNIEYTSELLQNGVDIDV, NGNSALHIAASKGYTKIATMLLLYGATIDA, and ELATPLHYAAANNYKDLTQYLLNMNANKSA.

The protein is Putative ankyrin repeat protein RP714 of Rickettsia prowazekii (strain Madrid E).